Consider the following 135-residue polypeptide: Retinol-binding protein 1 (135 aa).

The segment at 22 to 32 (RALDVNVALRK) is important for interaction with STRA6. All-trans-retinol is bound by residues lysine 41, methionine 63, and glutamine 109.

It belongs to the calycin superfamily. Fatty-acid binding protein (FABP) family. Interacts (only as retinol-free apoprotein) with STRA6.

It localises to the cytoplasm. Its subcellular location is the lipid droplet. In terms of biological role, cytoplasmic retinol-binding protein. Accepts retinol from the transport protein STRA6, and thereby contributes to retinol uptake, storage and retinoid homeostasis. This is Retinol-binding protein 1 (RBP1) from Bos taurus (Bovine).